The following is a 229-amino-acid chain: Putative germin-like protein 12-3 (229 aa).

Residues 1 to 22 (MASSNFFLLIPLIALVTTQAMA) form the signal peptide. The cysteines at positions 32 and 47 are disulfide-linked. Positions 62–217 (ANLDKPMDIT…AFQVDKKAVD (156 aa)) constitute a Cupin type-1 domain. Asparagine 78 carries an N-linked (GlcNAc...) asparagine glycan. Mn(2+)-binding residues include histidine 111, histidine 113, glutamate 118, and histidine 162.

The protein belongs to the germin family. As to quaternary structure, oligomer (believed to be a pentamer but probably hexamer).

Its subcellular location is the secreted. It localises to the extracellular space. The protein resides in the apoplast. Its function is as follows. May play a role in plant defense. Probably has no oxalate oxidase activity even if the active site is conserved. This is Putative germin-like protein 12-3 from Oryza sativa subsp. japonica (Rice).